A 331-amino-acid chain; its full sequence is Putative type II secretion system C-type protein YghF (331 aa).

A helical transmembrane segment spans residues 44-60 (MFWLMLLIISAKMAHSL).

The protein belongs to the GSP C family.

Its subcellular location is the cell inner membrane. Its function is as follows. Involved in a type II secretion system (T2SS, formerly general secretion pathway, GSP) for the export of folded proteins across the outer membrane. The protein is Putative type II secretion system C-type protein YghF of Escherichia coli (strain K12).